Here is a 156-residue protein sequence, read N- to C-terminus: Lipoprotein signal peptidase (156 aa).

3 helical membrane passes run 5–25 (FKFI…DQWV), 64–84 (YLHL…KTLL), and 89–109 (IAFG…FIYG). Catalysis depends on residues Asp-113 and Asp-130. The helical transmembrane segment at 122–142 (NFAIFNVADVMINISVALILI) threads the bilayer.

The protein belongs to the peptidase A8 family.

The protein resides in the cell inner membrane. The enzyme catalyses Release of signal peptides from bacterial membrane prolipoproteins. Hydrolyzes -Xaa-Yaa-Zaa-|-(S,diacylglyceryl)Cys-, in which Xaa is hydrophobic (preferably Leu), and Yaa (Ala or Ser) and Zaa (Gly or Ala) have small, neutral side chains.. It functions in the pathway protein modification; lipoprotein biosynthesis (signal peptide cleavage). In terms of biological role, this protein specifically catalyzes the removal of signal peptides from prolipoproteins. This is Lipoprotein signal peptidase from Campylobacter jejuni subsp. doylei (strain ATCC BAA-1458 / RM4099 / 269.97).